The primary structure comprises 526 residues: CTP synthase (526 aa).

Residues 1 to 270 are amidoligase domain; that stretch reads MKYIFVTGGV…ADVLSTHLGL (270 aa). Ser12 is a CTP binding site. Ser12 is a UTP binding site. Residues 13 to 18 and Asp70 each bind ATP; that span reads GLGKGI. Asp70 and Glu145 together coordinate Mg(2+). CTP-binding positions include 152–154, 191–196, and Lys227; these read DIE and KTKPTQ. UTP is bound by residues 191–196 and Lys227; that span reads KTKPTQ. Residues 293 to 525 enclose the Glutamine amidotransferase type-1 domain; sequence VAIVSKYGIE…VEACRANKRT (233 aa). Position 349 (Gly349) interacts with L-glutamine. Cys376 functions as the Nucleophile; for glutamine hydrolysis in the catalytic mechanism. L-glutamine-binding positions include 377–380, Glu400, and Arg455; that span reads LGFQ. Active-site residues include His498 and Glu500.

It belongs to the CTP synthase family. As to quaternary structure, homotetramer.

It carries out the reaction UTP + L-glutamine + ATP + H2O = CTP + L-glutamate + ADP + phosphate + 2 H(+). It catalyses the reaction L-glutamine + H2O = L-glutamate + NH4(+). The catalysed reaction is UTP + NH4(+) + ATP = CTP + ADP + phosphate + 2 H(+). Its pathway is pyrimidine metabolism; CTP biosynthesis via de novo pathway; CTP from UDP: step 2/2. Allosterically activated by GTP, when glutamine is the substrate; GTP has no effect on the reaction when ammonia is the substrate. The allosteric effector GTP functions by stabilizing the protein conformation that binds the tetrahedral intermediate(s) formed during glutamine hydrolysis. Inhibited by the product CTP, via allosteric rather than competitive inhibition. Its function is as follows. Catalyzes the ATP-dependent amination of UTP to CTP with either L-glutamine or ammonia as the source of nitrogen. Regulates intracellular CTP levels through interactions with the four ribonucleotide triphosphates. The sequence is that of CTP synthase from Methanoregula boonei (strain DSM 21154 / JCM 14090 / 6A8).